The primary structure comprises 184 residues: Myosin regulatory light chain 1 (184 aa).

Residues 1 to 29 (MFSSKENSLGAKRAPFSSNTTSSQRVAAQ) are disordered. S36 carries the phosphoserine modification. EF-hand domains are found at residues 45 to 80 (SQIQELKEAFALLDKDGDGNIGREDVKTMLTSLNQD) and 114 to 149 (SPRNDLLEAFSTFDDTQSGKIPISTMRDALSSMGDR). Ca(2+)-binding residues include D58, D60, D62, N64, and D69.

As to quaternary structure, binds to myosin II chains myo2 and myo3.

The protein localises to the cytoplasm. This Schizosaccharomyces pombe (strain 972 / ATCC 24843) (Fission yeast) protein is Myosin regulatory light chain 1 (rlc1).